Consider the following 511-residue polypeptide: Sodium/proline symporter 2 (511 aa).

13 helical membrane passes run 16 to 36 (WQTY…GYYG), 54 to 74 (IGPY…WMIM), 85 to 105 (LSAM…YFVV), 139 to 159 (IISG…GFVS), 175 to 195 (GLLM…YLAV), 204 to 224 (VIML…LNGI), 246 to 266 (VLGI…PHII), 286 to 306 (ISWM…GIAF), 327 to 347 (ILFH…AIMS), 381 to 401 (FLMV…WIAW), 410 to 430 (LVGN…IFSL), 438 to 458 (TGAL…IVWI), and 467 to 487 (LFGM…TYFV).

The protein belongs to the sodium:solute symporter (SSF) (TC 2.A.21) family.

The protein resides in the cell membrane. The enzyme catalyses L-proline(in) + Na(+)(in) = L-proline(out) + Na(+)(out). Catalyzes the sodium-dependent uptake of extracellular L-proline. This is Sodium/proline symporter 2 (putP2) from Staphylococcus saprophyticus subsp. saprophyticus (strain ATCC 15305 / DSM 20229 / NCIMB 8711 / NCTC 7292 / S-41).